Reading from the N-terminus, the 448-residue chain is Ribonuclease J (448 aa).

His81, His83, Asp85, His86, His151, and Asp173 together coordinate Zn(2+). 383–387 (HVSGH) is a substrate binding site. His409 is a binding site for Zn(2+).

It belongs to the metallo-beta-lactamase superfamily. RNA-metabolizing metallo-beta-lactamase-like family. Archaeal RNase J subfamily. As to quaternary structure, forms homodimers on heating to 60 degrees Celsius which may be the active form. It depends on Zn(2+) as a cofactor.

The protein resides in the cytoplasm. Its activity is regulated as follows. Inhibited by imidazole. Functionally, a 5'-3' exoribonuclease with a strong reference for 5'-monophosphorylated RNA and no endoribonuclease activty. Also has robust 5'-'3 nuclease activity on single-stranded DNA (exodeoxyribonuclease, exoDNase). May be involved in RNA degradation. This chain is Ribonuclease J, found in Methanocaldococcus jannaschii (strain ATCC 43067 / DSM 2661 / JAL-1 / JCM 10045 / NBRC 100440) (Methanococcus jannaschii).